We begin with the raw amino-acid sequence, 146 residues long: 3-hydroxyacyl-[acyl-carrier-protein] dehydratase FabZ (146 aa).

Histidine 49 is an active-site residue.

This sequence belongs to the thioester dehydratase family. FabZ subfamily.

The protein localises to the cytoplasm. The catalysed reaction is a (3R)-hydroxyacyl-[ACP] = a (2E)-enoyl-[ACP] + H2O. Functionally, involved in unsaturated fatty acids biosynthesis. Catalyzes the dehydration of short chain beta-hydroxyacyl-ACPs and long chain saturated and unsaturated beta-hydroxyacyl-ACPs. This is 3-hydroxyacyl-[acyl-carrier-protein] dehydratase FabZ from Pseudomonas putida (strain ATCC 700007 / DSM 6899 / JCM 31910 / BCRC 17059 / LMG 24140 / F1).